A 465-amino-acid polypeptide reads, in one-letter code: Glutamyl-tRNA reductase 2 (465 aa).

Residues 62–65, Ser-122, 127–129, and Gln-133 contribute to the substrate site; these read TCNR and EGQ. Cys-63 acts as the Nucleophile in catalysis. 204 to 209 serves as a coordination point for NADP(+); sequence GAGKMG.

Belongs to the glutamyl-tRNA reductase family.

The protein localises to the plastid. The protein resides in the chloroplast. It carries out the reaction (S)-4-amino-5-oxopentanoate + tRNA(Glu) + NADP(+) = L-glutamyl-tRNA(Glu) + NADPH + H(+). It participates in porphyrin-containing compound metabolism; protoporphyrin-IX biosynthesis; 5-aminolevulinate from L-glutamyl-tRNA(Glu): step 1/2. Catalyzes the NADPH-dependent reduction of glutamyl-tRNA(Glu) to glutamate 1-semialdehyde (GSA). The polypeptide is Glutamyl-tRNA reductase 2 (HEMA2) (Hordeum vulgare (Barley)).